The sequence spans 754 residues: Gelsolin, cytoplasmic (754 aa).

Positions 1-120 (MVPAFEGAGA…RYLKGGVASG (120 aa)) are actin-severing. The Gelsolin-like 1 repeat unit spans residues 22-71 (FEVVPYPKEKYGQFYQGDSYIVLYTRDVNGNLSWDLHFWLGSETSQDEAG). An actin-actin interfilament contact point region spans residues 68–71 (DEAG). A 1,2-diacyl-sn-glycero-3-phospho-(1D-myo-inositol-4,5-bisphosphate)-binding positions include 101–108 (LFLSRFKK) and 133–141 (RLFHVKGRR). Residues 143–183 (IRIRQVEVGVGSMNKGDCFILDCGSQVYAYMGPSSRKMDRL) form a Gelsolin-like 2 repeat. The tract at residues 209–238 (TASGSEAGESSPGLGGGSPDDVADEDTGVD) is disordered. A compositionally biased stretch (low complexity) spans 210–220 (ASGSEAGESSP). 4 Gelsolin-like repeats span residues 266–306 (NMIG…KEKV), 414–463 (LKLE…DEKA), 538–580 (FDTR…EEKA), and 643–684 (LRVN…QEKE). Residues 386–751 (LLQKNAGPAF…MKAQVPETNA (366 aa)) form an actin-binding, Ca-sensitive region. Ca(2+)-binding residues include G430, D431, E461, D556, E578, D659, D660, and E682.

Belongs to the villin/gelsolin family. Tail muscle.

The protein resides in the cytoplasm. The protein localises to the cytoskeleton. In terms of biological role, calcium-regulated, actin-modulating protein that binds to the plus (or barbed) ends of actin monomers or filaments, preventing monomer exchange (end-blocking or capping). It can promote the assembly of monomers into filaments (nucleation) as well as sever filaments already formed. This is Gelsolin, cytoplasmic from Homarus americanus (American lobster).